Here is a 353-residue protein sequence, read N- to C-terminus: Mitochondrial glutathione transporter SLC25A40 (353 aa).

Solcar repeat units lie at residues 14 to 132 (ITPF…LFAL), 140 to 224 (RSDL…GKWW), and 234 to 328 (PTVA…GKAF). Transmembrane regions (helical) follow at residues 20 to 40 (MMASCSGAIITSLLVTPLDVV), 104 to 124 (LWSGLPPTLIMAVPATVIYFT), 143 to 163 (LAPLFAGAIARVGSATVISPL), 200 to 221 (WGPTLLRDVPFSAMYWFNYEKG), 237 to 257 (AITFTAGALSGSIASIITLPF), and 299 to 319 (GLFAGFMPRLIKVAPACAIMI).

It belongs to the mitochondrial carrier (TC 2.A.29) family.

The protein localises to the mitochondrion inner membrane. It catalyses the reaction glutathione(in) = glutathione(out). Functionally, probable mitochondrial transporter required for glutathione import into mitochondria. Glutathione, which plays key roles in oxidative metabolism, is produced exclusively in the cytosol and is imported in many organelles. Mitochondrial glutathione is required for the activity and stability of proteins containing iron-sulfur clusters. In Danio rerio (Zebrafish), this protein is Mitochondrial glutathione transporter SLC25A40.